Consider the following 193-residue polypeptide: MIGRIAGTLLEKNPPRILVDCNGVGYEVDVPMSTFYNLPHTGEKVVLLTQLIVREDAHLLYGFLTPQERSTFRELLKITGVGARMALAVLSGMSVAELSQAVTLQDAARLTRVPGIGKKTAERLLLELKGKLGADLGPLAGAASPSDHAADILNALLALGYSEKEALAAIKNVPAGTGVSEGIKLSLKALSKA.

Residues 1–64 form a domain I region; the sequence is MIGRIAGTLL…EDAHLLYGFL (64 aa). The segment at 65 to 139 is domain II; the sequence is TPQERSTFRE…GKLGADLGPL (75 aa). Positions 139-143 are flexible linker; sequence LAGAA. The tract at residues 144–193 is domain III; it reads SPSDHAADILNALLALGYSEKEALAAIKNVPAGTGVSEGIKLSLKALSKA.

Belongs to the RuvA family. In terms of assembly, homotetramer. Forms an RuvA(8)-RuvB(12)-Holliday junction (HJ) complex. HJ DNA is sandwiched between 2 RuvA tetramers; dsDNA enters through RuvA and exits via RuvB. An RuvB hexamer assembles on each DNA strand where it exits the tetramer. Each RuvB hexamer is contacted by two RuvA subunits (via domain III) on 2 adjacent RuvB subunits; this complex drives branch migration. In the full resolvosome a probable DNA-RuvA(4)-RuvB(12)-RuvC(2) complex forms which resolves the HJ.

The protein localises to the cytoplasm. Its function is as follows. The RuvA-RuvB-RuvC complex processes Holliday junction (HJ) DNA during genetic recombination and DNA repair, while the RuvA-RuvB complex plays an important role in the rescue of blocked DNA replication forks via replication fork reversal (RFR). RuvA specifically binds to HJ cruciform DNA, conferring on it an open structure. The RuvB hexamer acts as an ATP-dependent pump, pulling dsDNA into and through the RuvAB complex. HJ branch migration allows RuvC to scan DNA until it finds its consensus sequence, where it cleaves and resolves the cruciform DNA. This chain is Holliday junction branch migration complex subunit RuvA, found in Burkholderia thailandensis (strain ATCC 700388 / DSM 13276 / CCUG 48851 / CIP 106301 / E264).